Consider the following 544-residue polypeptide: ATP synthase subunit alpha (544 aa).

173 to 180 (GDRQTGKT) contacts ATP. The disordered stretch occupies residues 513–544 (GSDGQIIGGGEPESDGEDVDVEQEQIVRQKRG). Acidic residues predominate over residues 524-535 (PESDGEDVDVEQ).

The protein belongs to the ATPase alpha/beta chains family. In terms of assembly, F-type ATPases have 2 components, CF(1) - the catalytic core - and CF(0) - the membrane proton channel. CF(1) has five subunits: alpha(3), beta(3), gamma(1), delta(1), epsilon(1). CF(0) has three main subunits: a(1), b(2) and c(9-12). The alpha and beta chains form an alternating ring which encloses part of the gamma chain. CF(1) is attached to CF(0) by a central stalk formed by the gamma and epsilon chains, while a peripheral stalk is formed by the delta and b chains.

It localises to the cell membrane. The enzyme catalyses ATP + H2O + 4 H(+)(in) = ADP + phosphate + 5 H(+)(out). Functionally, produces ATP from ADP in the presence of a proton gradient across the membrane. The alpha chain is a regulatory subunit. This Beutenbergia cavernae (strain ATCC BAA-8 / DSM 12333 / CCUG 43141 / JCM 11478 / NBRC 16432 / NCIMB 13614 / HKI 0122) protein is ATP synthase subunit alpha.